Here is a 905-residue protein sequence, read N- to C-terminus: Catenin alpha-2 (905 aa).

Phosphothreonine is present on Thr632. Ser640, Ser651, and Ser853 each carry phosphoserine. The span at 869–879 shows a compositional bias: basic and acidic residues; the sequence is VKREKPEEFQT. The segment at 869–891 is disordered; sequence VKREKPEEFQTRVRRGSQKKHIS. Positions 880 to 890 are enriched in basic residues; that stretch reads RVRRGSQKKHI. Ser891 is modified (phosphoserine).

It belongs to the vinculin/alpha-catenin family. In terms of assembly, interacts with CDH1 and CDH2. Interacts with ZNF639; recruits CTNNA2 to the nucleus. Interacts with F-actin.

Its subcellular location is the cell membrane. It is found in the cytoplasm. The protein localises to the cytoskeleton. It localises to the cell junction. The protein resides in the adherens junction. Its subcellular location is the cell projection. It is found in the axon. The protein localises to the nucleus. In terms of biological role, may function as a linker between cadherin adhesion receptors and the cytoskeleton to regulate cell-cell adhesion and differentiation in the nervous system. Required for proper regulation of cortical neuronal migration and neurite growth. It acts as a negative regulator of Arp2/3 complex activity and Arp2/3-mediated actin polymerization. It thereby suppresses excessive actin branching which would impair neurite growth and stability. Regulates morphological plasticity of synapses and cerebellar and hippocampal lamination during development. Functions in the control of startle modulation. This is Catenin alpha-2 (CTNNA2) from Pongo abelii (Sumatran orangutan).